The following is a 962-amino-acid chain: SH3 domain-binding protein 4 (962 aa).

An SH3 1 domain is found at 55-114 (GNAKEVIAIKDYCPNNFTTLKFSKGDHLYVLDTSGGEWWYAHNTTEMGYIPSSYVQPLNY). Residues Ser-131, Ser-245, Ser-250, Ser-278, and Ser-295 each carry the phosphoserine modification. Residues 316 to 453 (TNIVCKLDSS…LEPCMYLAIV (138 aa)) form the ZU5 domain. Position 636 is a phosphoserine (Ser-636). The 71-residue stretch at 653–723 (SSLKFGKLLK…HTKNVLVVGK (71 aa)) folds into the SH3 2 domain.

Homodimer or homooligomer. Interacts with DNM2, EPS15, clathrin, the adapter protein complex 2/AP-2 and TFRC. Interacts with the Rag GTPases RRAGA, RRAGB, RRAGC and RRAGD; the interaction is most probably direct, preferentially occurs with their inactive GDP-bound form and is negatively regulated by amino acids. Post-translationally, phosphorylated upon EGF stimulation. Phosphorylation prevents interaction with DNM2.

Its subcellular location is the membrane. It is found in the clathrin-coated pit. It localises to the cytoplasmic vesicle. The protein resides in the clathrin-coated vesicle. The protein localises to the nucleus. In terms of biological role, may function in transferrin receptor internalization at the plasma membrane through a cargo-specific control of clathrin-mediated endocytosis. Alternatively, may act as a negative regulator of the amino acid-induced TOR signaling by inhibiting the formation of active Rag GTPase complexes. Preferentially binds inactive Rag GTPase complexes and prevents their interaction with the mTORC1 complex inhibiting its relocalization to lysosomes and its activation. Thereby, may indirectly regulate cell growth, proliferation and autophagy. In Mus musculus (Mouse), this protein is SH3 domain-binding protein 4 (Sh3bp4).